The chain runs to 72 residues: Translation initiation factor IF-1 (72 aa).

The S1-like domain maps to 1–72 (MAKSDVIEVE…SKGRITYRFK (72 aa)).

The protein belongs to the IF-1 family. In terms of assembly, component of the 30S ribosomal translation pre-initiation complex which assembles on the 30S ribosome in the order IF-2 and IF-3, IF-1 and N-formylmethionyl-tRNA(fMet); mRNA recruitment can occur at any time during PIC assembly.

It is found in the cytoplasm. Its function is as follows. One of the essential components for the initiation of protein synthesis. Stabilizes the binding of IF-2 and IF-3 on the 30S subunit to which N-formylmethionyl-tRNA(fMet) subsequently binds. Helps modulate mRNA selection, yielding the 30S pre-initiation complex (PIC). Upon addition of the 50S ribosomal subunit IF-1, IF-2 and IF-3 are released leaving the mature 70S translation initiation complex. This is Translation initiation factor IF-1 from Levilactobacillus brevis (strain ATCC 367 / BCRC 12310 / CIP 105137 / JCM 1170 / LMG 11437 / NCIMB 947 / NCTC 947) (Lactobacillus brevis).